Consider the following 368-residue polypeptide: MKGLQVAFKQTLGHVVFDIELQLPSKGVSAIFGRSGAGKTSIINVISGLTQPEQGRIALNSDVLFDSVLGINVPVHQRNIGYVFQDSRLFPHYHVEGNLKYGVKQYDAEMFDKVVALLALQPLLKRYPASLSGGEKQRVAIGRALLSSPKILLMDEPLASLDMPRKKEVLPFLEKLSESFEIPIVYVTHSLQEILRLADHLTVLDRGQIVASGVLSEVWSSQAMRPWQSFSEQSTLFNANIAEQHPQYALTRVMLSSTASLWVQKIDAPLGSDIRLQVRANDVSITLVQPQKTSIRNIIEAKVERVEKRHPAEDKESIAVKLALTQDCFLWATITPWALADLNLKQGDRVFAQIKGVSVTQRDIALTH.

In terms of domain architecture, ABC transporter spans 1-231 (MKGLQVAFKQ…QAMRPWQSFS (231 aa)). An ATP-binding site is contributed by 33–40 (GRSGAGKT). A Mop domain is found at 292-363 (KTSIRNIIEA…IKGVSVTQRD (72 aa)).

It belongs to the ABC transporter superfamily. Molybdate importer (TC 3.A.1.8) family. As to quaternary structure, the complex is composed of two ATP-binding proteins (ModC), two transmembrane proteins (ModB) and a solute-binding protein (ModA).

The protein resides in the cell inner membrane. The enzyme catalyses molybdate(out) + ATP + H2O = molybdate(in) + ADP + phosphate + H(+). Functionally, part of the ABC transporter complex ModABC involved in molybdenum import. Responsible for energy coupling to the transport system. In Vibrio vulnificus (strain YJ016), this protein is Molybdenum import ATP-binding protein ModC.